The sequence spans 217 residues: Probable transaldolase (217 aa).

Catalysis depends on K83, which acts as the Schiff-base intermediate with substrate.

It belongs to the transaldolase family. Type 3B subfamily.

The protein resides in the cytoplasm. The catalysed reaction is D-sedoheptulose 7-phosphate + D-glyceraldehyde 3-phosphate = D-erythrose 4-phosphate + beta-D-fructose 6-phosphate. It participates in carbohydrate degradation; pentose phosphate pathway; D-glyceraldehyde 3-phosphate and beta-D-fructose 6-phosphate from D-ribose 5-phosphate and D-xylulose 5-phosphate (non-oxidative stage): step 2/3. Its function is as follows. Transaldolase is important for the balance of metabolites in the pentose-phosphate pathway. This is Probable transaldolase from Rhizobium meliloti (strain 1021) (Ensifer meliloti).